The following is a 306-amino-acid chain: Probable GTP 3',8-cyclase (306 aa).

The region spanning 5 to 232 (RFGRPVTNLR…RRRKYFLPVD (228 aa)) is the Radical SAM core domain. Arg-14 is a binding site for GTP. 2 residues coordinate [4Fe-4S] cluster: Cys-21 and Cys-25. Tyr-27 contacts S-adenosyl-L-methionine. Cys-28 serves as a coordination point for [4Fe-4S] cluster. Residue Lys-61 coordinates GTP. Gly-65 serves as a coordination point for S-adenosyl-L-methionine. Thr-90 is a binding site for GTP. Ser-114 lines the S-adenosyl-L-methionine pocket. Lys-150 contributes to the GTP binding site. S-adenosyl-L-methionine is bound at residue Met-189. [4Fe-4S] cluster contacts are provided by Cys-250 and Cys-253. 255 to 257 (RLR) provides a ligand contact to GTP. Residue Cys-267 coordinates [4Fe-4S] cluster.

This sequence belongs to the radical SAM superfamily. MoaA family. Requires [4Fe-4S] cluster as cofactor.

It catalyses the reaction GTP + AH2 + S-adenosyl-L-methionine = (8S)-3',8-cyclo-7,8-dihydroguanosine 5'-triphosphate + 5'-deoxyadenosine + L-methionine + A + H(+). It functions in the pathway cofactor biosynthesis; molybdopterin biosynthesis. Catalyzes the cyclization of GTP to (8S)-3',8-cyclo-7,8-dihydroguanosine 5'-triphosphate. The chain is Probable GTP 3',8-cyclase from Pyrococcus abyssi (strain GE5 / Orsay).